Consider the following 306-residue polypeptide: Curved DNA-binding protein (306 aa).

Residues 5–69 (DYYAIMGVKP…QRRAEYDQLW (65 aa)) form the J domain.

The protein resides in the cytoplasm. The protein localises to the nucleoid. Functionally, DNA-binding protein that preferentially recognizes a curved DNA sequence. It is probably a functional analog of DnaJ; displays overlapping activities with DnaJ, but functions under different conditions, probably acting as a molecular chaperone in an adaptive response to environmental stresses other than heat shock. Lacks autonomous chaperone activity; binds native substrates and targets them for recognition by DnaK. Its activity is inhibited by the binding of CbpM. The sequence is that of Curved DNA-binding protein from Salmonella arizonae (strain ATCC BAA-731 / CDC346-86 / RSK2980).